Consider the following 190-residue polypeptide: Segregation and condensation protein B (190 aa).

The protein belongs to the ScpB family. Homodimer. Homodimerization may be required to stabilize the binding of ScpA to the Smc head domains. Component of a cohesin-like complex composed of ScpA, ScpB and the Smc homodimer, in which ScpA and ScpB bind to the head domain of Smc. The presence of the three proteins is required for the association of the complex with DNA.

The protein resides in the cytoplasm. In terms of biological role, participates in chromosomal partition during cell division. May act via the formation of a condensin-like complex containing Smc and ScpA that pull DNA away from mid-cell into both cell halves. This Bacillus cereus (strain ZK / E33L) protein is Segregation and condensation protein B.